The primary structure comprises 331 residues: Phosphate acyltransferase (331 aa).

The protein belongs to the PlsX family. In terms of assembly, homodimer. Probably interacts with PlsY.

It is found in the cytoplasm. The catalysed reaction is a fatty acyl-[ACP] + phosphate = an acyl phosphate + holo-[ACP]. Its pathway is lipid metabolism; phospholipid metabolism. In terms of biological role, catalyzes the reversible formation of acyl-phosphate (acyl-PO(4)) from acyl-[acyl-carrier-protein] (acyl-ACP). This enzyme utilizes acyl-ACP as fatty acyl donor, but not acyl-CoA. The sequence is that of Phosphate acyltransferase from Mesoplasma florum (strain ATCC 33453 / NBRC 100688 / NCTC 11704 / L1) (Acholeplasma florum).